Here is a 422-residue protein sequence, read N- to C-terminus: Dihydrolipoyllysine-residue succinyltransferase component of 2-oxoglutarate dehydrogenase complex (422 aa).

Residues 1 to 76 (MPEVKVPELA…EVGQAIAIIG (76 aa)) enclose the Lipoyl-binding domain. Lys-42 carries the post-translational modification N6-lipoyllysine. The segment at 77-185 (EGSGNASKEN…SAKEEKKYNQ (109 aa)) is disordered. Composition is skewed to polar residues over residues 80 to 94 (GNAS…TPQQ) and 116 to 130 (NQAN…NATP). The 37-residue stretch at 127–163 (NATPSARRYARENGVNLAEVSPKTNDVVRKEDIDKKQ) folds into the Peripheral subunit-binding (PSBD) domain. A compositionally biased stretch (basic and acidic residues) spans 152–163 (DVVRKEDIDKKQ). Low complexity predominate over residues 164–176 (QAPASTQTTQQAS). Active-site residues include His-393 and Asp-397.

It belongs to the 2-oxoacid dehydrogenase family. In terms of assembly, forms a 24-polypeptide structural core with octahedral symmetry. Part of the 2-oxoglutarate dehydrogenase (OGDH) complex composed of E1 (2-oxoglutarate dehydrogenase), E2 (dihydrolipoamide succinyltransferase) and E3 (dihydrolipoamide dehydrogenase); the complex contains multiple copies of the three enzymatic components (E1, E2 and E3). Requires (R)-lipoate as cofactor.

The enzyme catalyses N(6)-[(R)-dihydrolipoyl]-L-lysyl-[protein] + succinyl-CoA = N(6)-[(R)-S(8)-succinyldihydrolipoyl]-L-lysyl-[protein] + CoA. It functions in the pathway amino-acid degradation; L-lysine degradation via saccharopine pathway; glutaryl-CoA from L-lysine: step 6/6. Its function is as follows. E2 component of the 2-oxoglutarate dehydrogenase (OGDH) complex which catalyzes the second step in the conversion of 2-oxoglutarate to succinyl-CoA and CO(2). This chain is Dihydrolipoyllysine-residue succinyltransferase component of 2-oxoglutarate dehydrogenase complex (odhB), found in Staphylococcus aureus (strain USA300).